The chain runs to 124 residues: Outer dense fiber protein 2 (124 aa).

A coiled-coil region spans residues 13-124 (KEDSERLMEQ…EAIMEQLKEL (112 aa)).

The protein belongs to the ODF2 family. Self-associates. Associates with microtubules and forms a fibrillar structure partially linked to the microtubule network. Interacts through its C-terminus with PLK1. Interacts with ODF1. Interacts with MARK4; the interaction is required for localization of ODF2 to centrioles. Interacts with TSSK4. Interacts with AKNA. Interacts with QRICH2. Interacts with CFAP58. Interacts with BBOF1. Interacts with CCDC38. Interacts with CCDC42. Post-translationally, tyrosine phosphorylated. In terms of tissue distribution, detected in sperm flagella (at protein level).

Its subcellular location is the cytoplasm. It is found in the cytoskeleton. The protein resides in the microtubule organizing center. The protein localises to the centrosome. It localises to the cell projection. Its subcellular location is the cilium. It is found in the centriole. The protein resides in the spindle pole. The protein localises to the flagellum. Functionally, seems to be a major component of sperm tail outer dense fibers (ODF). ODFs are filamentous structures located on the outside of the axoneme in the midpiece and principal piece of the mammalian sperm tail and may help to maintain the passive elastic structures and elastic recoil of the sperm tail. May have a modulating influence on sperm motility. Functions as a general scaffold protein that is specifically localized at the distal/subdistal appendages of mother centrioles. Component of the centrosome matrix required for the localization of PLK1 and NIN to the centrosomes. Required for the formation and/or maintenance of normal CETN1 assembly. The chain is Outer dense fiber protein 2 from Mesocricetus auratus (Golden hamster).